The sequence spans 71 residues: Small ribosomal subunit protein bS21 (71 aa).

Residues 48–59 show a composition bias toward basic residues; sequence KAAAAVKRHAKK. A disordered region spans residues 48–71; that stretch reads KAAAAVKRHAKKVQREQRRRERLY. The segment covering 60-71 has biased composition (basic and acidic residues); sequence VQREQRRRERLY.

The protein belongs to the bacterial ribosomal protein bS21 family.

This chain is Small ribosomal subunit protein bS21, found in Azotobacter vinelandii (strain DJ / ATCC BAA-1303).